Reading from the N-terminus, the 92-residue chain is MTRSIKKNPFVANHLLVKIEKLNMRQEKEIIVTWSRASTIIPTMIGHTIAIHNGKEHLPIYITDRMVGHKLGEFAPTRSFGKHARNDIKSRR.

Belongs to the universal ribosomal protein uS19 family.

The protein resides in the plastid. It localises to the chloroplast. In terms of biological role, protein S19 forms a complex with S13 that binds strongly to the 16S ribosomal RNA. This chain is Small ribosomal subunit protein uS19c, found in Lemna minor (Common duckweed).